A 932-amino-acid chain; its full sequence is Protein translocase subunit SecA (932 aa).

ATP is bound by residues glutamine 87, 105-109, and aspartate 515; that span reads GEGKT. Positions 916, 918, 927, and 928 each coordinate Zn(2+).

It belongs to the SecA family. As to quaternary structure, monomer and homodimer. Part of the essential Sec protein translocation apparatus which comprises SecA, SecYEG and auxiliary proteins SecDF-YajC and YidC. The cofactor is Zn(2+).

Its subcellular location is the cell inner membrane. The protein resides in the cytoplasm. The catalysed reaction is ATP + H2O + cellular proteinSide 1 = ADP + phosphate + cellular proteinSide 2.. In terms of biological role, part of the Sec protein translocase complex. Interacts with the SecYEG preprotein conducting channel. Has a central role in coupling the hydrolysis of ATP to the transfer of proteins into and across the cell membrane, serving both as a receptor for the preprotein-SecB complex and as an ATP-driven molecular motor driving the stepwise translocation of polypeptide chains across the membrane. This Burkholderia multivorans (strain ATCC 17616 / 249) protein is Protein translocase subunit SecA.